The following is a 105-amino-acid chain: MLITTTPFIEGRPVQEYKGAIYAQSILGANVVLDLLAAIRDFIGGHSKSYERVLARAREDAMKNLIKEAEKLGANAILAVDLDYNTVGPQGSMMMVSVSGTAVVL.

It belongs to the UPF0145 family.

This Caulobacter vibrioides (strain NA1000 / CB15N) (Caulobacter crescentus) protein is UPF0145 protein CCNA_02462.